The sequence spans 495 residues: tRNA-guanine(15) transglycosylase (495 aa).

Aspartate 83 serves as the catalytic Nucleophile. Aspartate 118 contributes to the substrate binding site. 2 residues coordinate Zn(2+): cysteine 273 and cysteine 278.

It belongs to the archaeosine tRNA-ribosyltransferase family. Zn(2+) is required as a cofactor.

The catalysed reaction is guanosine(15) in tRNA + 7-cyano-7-deazaguanine = 7-cyano-7-carbaguanosine(15) in tRNA + guanine. Its pathway is tRNA modification; archaeosine-tRNA biosynthesis. In terms of biological role, exchanges the guanine residue with 7-cyano-7-deazaguanine (preQ0) at position 15 in the dihydrouridine loop (D-loop) of archaeal tRNAs. In Pyrobaculum aerophilum (strain ATCC 51768 / DSM 7523 / JCM 9630 / CIP 104966 / NBRC 100827 / IM2), this protein is tRNA-guanine(15) transglycosylase.